The chain runs to 282 residues: 4-hydroxybenzoate octaprenyltransferase (282 aa).

A run of 9 helical transmembrane segments spans residues 17 to 37 (IGIL…NQGF), 40 to 60 (IDLL…GCVI), 90 to 110 (AFIL…KLPI), 113 to 133 (FYFA…KRFF), 135 to 155 (APQL…FIAS), 163 to 183 (FIVL…MYAM), 207 to 227 (LIIA…AINK), 231 to 251 (CFFY…LKLI), and 262 to 282 (AFLV…LALI).

It belongs to the UbiA prenyltransferase family. Mg(2+) is required as a cofactor.

It localises to the cell inner membrane. The catalysed reaction is all-trans-octaprenyl diphosphate + 4-hydroxybenzoate = 4-hydroxy-3-(all-trans-octaprenyl)benzoate + diphosphate. It functions in the pathway cofactor biosynthesis; ubiquinone biosynthesis. Catalyzes the prenylation of para-hydroxybenzoate (PHB) with an all-trans polyprenyl group. Mediates the second step in the final reaction sequence of ubiquinone-8 (UQ-8) biosynthesis, which is the condensation of the polyisoprenoid side chain with PHB, generating the first membrane-bound Q intermediate 3-octaprenyl-4-hydroxybenzoate. The polypeptide is 4-hydroxybenzoate octaprenyltransferase (Legionella pneumophila (strain Lens)).